The sequence spans 137 residues: Probable calcium-binding protein CML33 (137 aa).

EF-hand domains are found at residues 1-36 (MNNM…LSPS), 37-72 (IPSE…TAQS), 76-111 (DVEK…LGEK), and 112-137 (CTVE…FVGV). Positions 14, 16, 18, 20, and 25 each coordinate Ca(2+). Ca(2+)-binding residues include aspartate 89, asparagine 91, aspartate 93, lysine 95, and glutamate 100.

Potential calcium sensor. The sequence is that of Probable calcium-binding protein CML33 (CML33) from Arabidopsis thaliana (Mouse-ear cress).